The chain runs to 233 residues: Pyridoxal phosphate homeostasis protein (233 aa).

Lys35 is modified (N6-(pyridoxal phosphate)lysine).

The protein belongs to the pyridoxal phosphate-binding protein YggS/PROSC family.

Functionally, pyridoxal 5'-phosphate (PLP)-binding protein, which is involved in PLP homeostasis. The polypeptide is Pyridoxal phosphate homeostasis protein (Pasteurella multocida (strain Pm70)).